A 732-amino-acid chain; its full sequence is MSYGYDDEDAKRKKRYVIISISSVLLISMVVAVTIGVSVNKSDNAGDEEITTSVKAIKDVCAPTDYKETCEDTLRKDAKDTSDPLELVKTAFNATMKQISDVAKKSQTMIELQKDPRAKMALDQCKELMDYAIGELSKSFEELGKFEFHKVDEALVKLRIWLSATISHEQTCLDGFQGTQGNAGETIKKALKTAVQLTHNGLAMVTEMSNYLGQMQIPEMNSRRLLSQEFPSWMDARARRLLNAPMSEVKPDIVVAQDGSGQYKTINEALNFVPKKKNTTFVVHIKEGIYKEYVQVNRSMTHLVFIGDGPDKTVISGSKSYKDGITTYKTATVAIVGDHFIAKNIAFENTAGAIKHQAVAIRVLADESIFYNCKFDGYQDTLYAHSHRQFYRDCTISGTIDFLFGDAAAVFQNCTLLVRKPLLNQACPITAHGRKDPRESTGFVLQGCTIVGEPDYLAVKEQSKTYLGRPWKEYSRTIIMNTFIPDFVPPEGWQPWLGEFGLNTLFYSEVQNTGPGAAITKRVTWPGIKKLSDEEILKFTPAQYIQGDAWIPGKGVPYILGLFSGNGSTNSTVTGSSLSSNTTESSDSPSTVVTPSTSPPAGHLGSPSDTPSSVVSPSTSLPAGQLGAPPATPSMVVSPSTSPPAGHLGSPSDTPSSLVSPSTSPPAGHLGSPSDTPSSVVTPSASPSTSPSASPSVSPSAFPSASPSASPSASPSVSPSASPSASPQSSIG.

Residues 17-37 (VIISISSVLLISMVVAVTIGV) form a helical membrane-spanning segment. N-linked (GlcNAc...) asparagine glycosylation is found at asparagine 40, asparagine 93, asparagine 278, and asparagine 297. Residues 51 to 204 (TTSVKAIKDV…VQLTHNGLAM (154 aa)) form a pectinesterase inhibitor 28 region. Positions 252–548 (DIVVAQDGSG…FTPAQYIQGD (297 aa)) are pectinesterase 28. Substrate is bound by residues threonine 327 and glutamine 357. Aspartate 380 functions as the Proton donor; for pectinesterase activity in the catalytic mechanism. The cysteines at positions 394 and 414 are disulfide-linked. Aspartate 401 functions as the Nucleophile; for pectinesterase activity in the catalytic mechanism. N-linked (GlcNAc...) asparagine glycosylation occurs at asparagine 413. Arginine 469 and tryptophan 471 together coordinate substrate. N-linked (GlcNAc...) asparagine glycans are attached at residues asparagine 566, asparagine 570, and asparagine 581. Low complexity-rich tracts occupy residues 570-620 (NSTV…PSTS) and 633-732 (PSMV…SSIG). The tract at residues 570–732 (NSTVTGSSLS…PSASPQSSIG (163 aa)) is disordered.

It in the N-terminal section; belongs to the PMEI family. This sequence in the C-terminal section; belongs to the pectinesterase family. Expressed in flower buds.

It is found in the membrane. The enzyme catalyses [(1-&gt;4)-alpha-D-galacturonosyl methyl ester](n) + n H2O = [(1-&gt;4)-alpha-D-galacturonosyl](n) + n methanol + n H(+). It functions in the pathway glycan metabolism; pectin degradation; 2-dehydro-3-deoxy-D-gluconate from pectin: step 1/5. In terms of biological role, acts in the modification of cell walls via demethylesterification of cell wall pectin. The chain is Putative pectinesterase/pectinesterase inhibitor 28 (PME28) from Arabidopsis thaliana (Mouse-ear cress).